Reading from the N-terminus, the 281-residue chain is uncharacterized protein (281 aa).

A helical transmembrane segment spans residues 5–27 (AYVTVIYGNNIYLTGALVLGYTL).

It is found in the membrane. This is an uncharacterized protein from Acanthamoeba polyphaga mimivirus (APMV).